Consider the following 129-residue polypeptide: Small ribosomal subunit protein uS11 (129 aa).

The protein belongs to the universal ribosomal protein uS11 family. In terms of assembly, part of the 30S ribosomal subunit. Interacts with proteins S7 and S18. Binds to IF-3.

Located on the platform of the 30S subunit, it bridges several disparate RNA helices of the 16S rRNA. Forms part of the Shine-Dalgarno cleft in the 70S ribosome. The sequence is that of Small ribosomal subunit protein uS11 from Rhizobium etli (strain CIAT 652).